Here is a 289-residue protein sequence, read N- to C-terminus: NAD(P)H-hydrate epimerase (289 aa).

In terms of domain architecture, YjeF N-terminal spans 71–277; that stretch reads AQTIDNELMS…SIVEKYNLKV (207 aa). 122 to 126 contributes to the (6S)-NADPHX binding site; the sequence is NNGGD. Residues Asn-123 and Asp-185 each contribute to the K(+) site. Residues 189–195 and Asp-218 each bind (6S)-NADPHX; that span reads GFSFTGE. Ser-221 contributes to the K(+) binding site.

Belongs to the NnrE/AIBP family. K(+) is required as a cofactor.

The enzyme catalyses (6R)-NADHX = (6S)-NADHX. It catalyses the reaction (6R)-NADPHX = (6S)-NADPHX. Catalyzes the epimerization of the S- and R-forms of NAD(P)HX, a damaged form of NAD(P)H that is a result of enzymatic or heat-dependent hydration. This is a prerequisite for the S-specific NAD(P)H-hydrate dehydratase to allow the repair of both epimers of NAD(P)HX. The sequence is that of NAD(P)H-hydrate epimerase from Plasmodium vivax (strain Salvador I).